A 196-amino-acid chain; its full sequence is Large ribosomal subunit protein uL10 (196 aa).

Residues 169–196 are disordered; that stretch reads KAAECPAEAPQPAAETPAEAPEAPADAE. Residues 172–196 show a composition bias toward low complexity; it reads ECPAEAPQPAAETPAEAPEAPADAE.

It belongs to the universal ribosomal protein uL10 family. Part of the ribosomal stalk of the 50S ribosomal subunit. The N-terminus interacts with L11 and the large rRNA to form the base of the stalk. The C-terminus forms an elongated spine to which L12 dimers bind in a sequential fashion forming a multimeric L10(L12)X complex.

Forms part of the ribosomal stalk, playing a central role in the interaction of the ribosome with GTP-bound translation factors. The protein is Large ribosomal subunit protein uL10 of Mycobacterium avium (strain 104).